Reading from the N-terminus, the 515-residue chain is Sterol 14-alpha demethylase cyp51A (515 aa).

A helical transmembrane segment spans residues 7–29; that stretch reads LTAYMAVAVLTAILLNVVYQLFF. 2 N-linked (GlcNAc...) asparagine glycosylation sites follow: asparagine 33 and asparagine 269. Cysteine 454 is a binding site for heme. N-linked (GlcNAc...) asparagine glycosylation occurs at asparagine 512.

The protein belongs to the cytochrome P450 family. The cofactor is heme.

Its subcellular location is the endoplasmic reticulum membrane. The catalysed reaction is a 14alpha-methyl steroid + 3 reduced [NADPH--hemoprotein reductase] + 3 O2 = a Delta(14) steroid + formate + 3 oxidized [NADPH--hemoprotein reductase] + 4 H2O + 4 H(+). It catalyses the reaction a 14alpha-methyl steroid + reduced [NADPH--hemoprotein reductase] + O2 = a 14alpha-hydroxymethyl steroid + oxidized [NADPH--hemoprotein reductase] + H2O + H(+). The enzyme catalyses a 14alpha-hydroxymethyl steroid + reduced [NADPH--hemoprotein reductase] + O2 = a 14alpha-formyl steroid + oxidized [NADPH--hemoprotein reductase] + 2 H2O + H(+). It carries out the reaction a 14alpha-formyl steroid + reduced [NADPH--hemoprotein reductase] + O2 = a Delta(14) steroid + formate + oxidized [NADPH--hemoprotein reductase] + H2O + 2 H(+). The catalysed reaction is lanosterol + 3 reduced [NADPH--hemoprotein reductase] + 3 O2 = 4,4-dimethyl-5alpha-cholesta-8,14,24-trien-3beta-ol + formate + 3 oxidized [NADPH--hemoprotein reductase] + 4 H2O + 4 H(+). It catalyses the reaction lanosterol + reduced [NADPH--hemoprotein reductase] + O2 = 32-hydroxylanosterol + oxidized [NADPH--hemoprotein reductase] + H2O + H(+). The enzyme catalyses 32-hydroxylanosterol + reduced [NADPH--hemoprotein reductase] + O2 = 32-oxolanosterol + oxidized [NADPH--hemoprotein reductase] + 2 H2O + H(+). It carries out the reaction 32-oxolanosterol + reduced [NADPH--hemoprotein reductase] + O2 = 4,4-dimethyl-5alpha-cholesta-8,14,24-trien-3beta-ol + formate + oxidized [NADPH--hemoprotein reductase] + H2O + 2 H(+). The catalysed reaction is eburicol + 3 reduced [NADPH--hemoprotein reductase] + 3 O2 = 14-demethyleburicol + formate + 3 oxidized [NADPH--hemoprotein reductase] + 4 H2O + 4 H(+). It catalyses the reaction eburicol + reduced [NADPH--hemoprotein reductase] + O2 = 32-hydroxyeburicol + oxidized [NADPH--hemoprotein reductase] + H2O + H(+). The enzyme catalyses 32-hydroxyeburicol + reduced [NADPH--hemoprotein reductase] + O2 = 32-oxoeburicol + oxidized [NADPH--hemoprotein reductase] + 2 H2O + H(+). It carries out the reaction 32-oxoeburicol + reduced [NADPH--hemoprotein reductase] + O2 = 14-demethyleburicol + formate + oxidized [NADPH--hemoprotein reductase] + H2O + 2 H(+). It participates in steroid metabolism; ergosterol biosynthesis. Its activity is regulated as follows. The sterol 14-alpha demethylase activity is inhibited by azole compounds. Activity is inhibited by the novel and long-acting fungicidal azole, PC1244. Sterol 14alpha-demethylase, encoded by cyp51A and cyp51B, that plays a critical role in the third module of ergosterol biosynthesis pathway, being ergosterol the major sterol component in fungal membranes that participates in a variety of functions. The third module or late pathway involves the ergosterol synthesis itself through consecutive reactions that mainly occur in the endoplasmic reticulum (ER) membrane. In filamentous fungi, during the initial step of this module, lanosterol (lanosta-8,24-dien-3beta-ol) can be metabolized to eburicol. Sterol 14alpha-demethylase catalyzes the three-step oxidative removal of the 14alpha-methyl group (C-32) of both these sterols in the form of formate, and converts eburicol and lanosterol to 14-demethyleburicol (4,4,24-trimethylergosta-8,14,24(28)-trienol) and 4,4-dimethyl-5alpha-cholesta-8,14,24-trien-3beta-ol, respectively, which are further metabolized by other enzymes in the pathway to ergosterol. Can also use substrates not intrinsic to fungi, such as 24,25-dihydrolanosterol (DHL), producing 4,4'-dimethyl-8,14-cholestadien-3-beta-ol, but at lower rates than the endogenous substrates. In terms of biological role, as a target of azole drugs, plays a crucial role in azole susceptibility. In Aspergillus fumigatus (strain ATCC MYA-4609 / CBS 101355 / FGSC A1100 / Af293) (Neosartorya fumigata), this protein is Sterol 14-alpha demethylase cyp51A.